The primary structure comprises 296 residues: N-acetylmuramic acid 6-phosphate etherase 2 (296 aa).

Positions 55–218 constitute an SIS domain; sequence IVANFKAGGR…STASMVGIGK (164 aa). Glu-83 serves as the catalytic Proton donor. Glu-114 is a catalytic residue.

The protein belongs to the GCKR-like family. MurNAc-6-P etherase subfamily. Homodimer.

It carries out the reaction N-acetyl-D-muramate 6-phosphate + H2O = N-acetyl-D-glucosamine 6-phosphate + (R)-lactate. It functions in the pathway amino-sugar metabolism; N-acetylmuramate degradation. Its function is as follows. Specifically catalyzes the cleavage of the D-lactyl ether substituent of MurNAc 6-phosphate, producing GlcNAc 6-phosphate and D-lactate. The protein is N-acetylmuramic acid 6-phosphate etherase 2 of Lactiplantibacillus plantarum (strain ATCC BAA-793 / NCIMB 8826 / WCFS1) (Lactobacillus plantarum).